A 1009-amino-acid chain; its full sequence is Type VII secretion system accessory factor EsaA (1009 aa).

6 helical membrane-spanning segments follow: residues 7–27, 822–842, 869–889, 903–923, 928–948, and 979–999; these read IYAL…IFFV, ISPT…AYIF, VITS…VGLI, KFIL…TYLL, SIGM…MNNL, and IGLA…LNMF.

It belongs to the EsaA family. Homodimer. Interacts with EssB.

It localises to the cell membrane. Component of the type VII secretion system (Ess). Provides together with EssB and other components such as EssC and EssE a secretion platform across the cytoplasmic membrane in the host. This chain is Type VII secretion system accessory factor EsaA, found in Staphylococcus aureus (strain MSSA476).